We begin with the raw amino-acid sequence, 409 residues long: Argininosuccinate synthase (409 aa).

Residues 11 to 19 and Ala38 contribute to the ATP site; that span reads AYSGGLDTS. The L-citrulline site is built by Tyr91 and Ser96. Gly121 contacts ATP. Residues Thr123, Asn127, and Asp128 each contribute to the L-aspartate site. Asn127 contributes to the L-citrulline binding site. The L-citrulline site is built by Arg131, Ser182, Ser191, Glu267, and Tyr279.

The protein belongs to the argininosuccinate synthase family. Type 1 subfamily. In terms of assembly, homotetramer.

Its subcellular location is the cytoplasm. It carries out the reaction L-citrulline + L-aspartate + ATP = 2-(N(omega)-L-arginino)succinate + AMP + diphosphate + H(+). It functions in the pathway amino-acid biosynthesis; L-arginine biosynthesis; L-arginine from L-ornithine and carbamoyl phosphate: step 2/3. This is Argininosuccinate synthase from Nitrobacter winogradskyi (strain ATCC 25391 / DSM 10237 / CIP 104748 / NCIMB 11846 / Nb-255).